A 121-amino-acid polypeptide reads, in one-letter code: Large ribosomal subunit protein bL17 (121 aa).

This sequence belongs to the bacterial ribosomal protein bL17 family. Part of the 50S ribosomal subunit. Contacts protein L32.

This Sulfurihydrogenibium sp. (strain YO3AOP1) protein is Large ribosomal subunit protein bL17.